The primary structure comprises 28 residues: Phospholipase A2 2 (28 aa).

Belongs to the phospholipase A2 family. Group I subfamily. It depends on Ca(2+) as a cofactor. Expressed by the venom gland.

The protein localises to the secreted. It catalyses the reaction a 1,2-diacyl-sn-glycero-3-phosphocholine + H2O = a 1-acyl-sn-glycero-3-phosphocholine + a fatty acid + H(+). Its function is as follows. Snake venom phospholipase A2 (PLA2) that inhibits neuromuscular transmission by blocking acetylcholine release from the nerve termini. PLA2 catalyzes the calcium-dependent hydrolysis of the 2-acyl groups in 3-sn-phosphoglycerides. In Micrurus nigrocinctus (Central American coral snake), this protein is Phospholipase A2 2.